A 32-amino-acid polypeptide reads, in one-letter code: MSDIN-like toxin proprotein 3 (32 aa).

The propeptide occupies 1–10; sequence MSDINATRLP. A cross-link (cyclopeptide (Val-Pro)) is located at residues 11 to 17; sequence VWIGYSP. The propeptide occupies 18-32; that stretch reads CVGDDAVALLNRGEG.

The protein belongs to the MSDIN fungal toxin family. Processed by the macrocyclase-peptidase enzyme POPB to yield a toxic cyclic heptapeptide. POPB first removes 10 residues from the N-terminus. Conformational trapping of the remaining peptide forces the enzyme to release this intermediate rather than proceed to macrocyclization. The enzyme rebinds the remaining peptide in a different conformation and catalyzes macrocyclization of the N-terminal 7 residues.

Its function is as follows. Probable toxin that belongs to the MSDIN-like toxin family responsible for a large number of food poisoning cases and deaths. This Amanita fuligineoides protein is MSDIN-like toxin proprotein 3.